Here is a 267-residue protein sequence, read N- to C-terminus: Chaperone protein MyfB (267 aa).

The first 34 residues, 1-34 (MKYKFSHNFISYNLFLFVFMSLILLPYSHASSMG), serve as a signal peptide directing secretion. Cysteine 127 and cysteine 164 are joined by a disulfide.

It belongs to the periplasmic pilus chaperone family.

It localises to the periplasm. Its function is as follows. Required for the biogenesis of the MyfA fimbria. The protein is Chaperone protein MyfB (myfB) of Yersinia enterocolitica.